The following is a 302-amino-acid chain: UTP--glucose-1-phosphate uridylyltransferase (302 aa).

It belongs to the UDPGP type 2 family. Homotetramer or homopentamer. Mg(2+) serves as cofactor.

The enzyme catalyses alpha-D-glucose 1-phosphate + UTP + H(+) = UDP-alpha-D-glucose + diphosphate. May play a role in stationary phase survival. The polypeptide is UTP--glucose-1-phosphate uridylyltransferase (galU) (Escherichia coli O157:H7).